A 641-amino-acid chain; its full sequence is Chaperone protein DnaK (641 aa).

At threonine 200 the chain carries Phosphothreonine; by autocatalysis. The segment covering alanine 606 to lysine 623 has biased composition (low complexity). Residues alanine 606–aspartate 627 are disordered.

It belongs to the heat shock protein 70 family.

Its function is as follows. Acts as a chaperone. The protein is Chaperone protein DnaK of Xanthomonas euvesicatoria pv. vesicatoria (strain 85-10) (Xanthomonas campestris pv. vesicatoria).